Consider the following 472-residue polypeptide: Clampless protein 1 (472 aa).

N-linked (GlcNAc...) asparagine glycosylation is found at asparagine 70 and asparagine 296.

Functionally, required for developmental progression after cells of opposite mating types fuse with one another, essential for processes common to both dikaryotic filament formation and monokaryotic fruiting. A direct target for transcription factors Sxi1-alpha and Sxi2-a. The protein is Clampless protein 1 of Cryptococcus neoformans var. neoformans serotype D (strain B-3501A) (Filobasidiella neoformans).